A 185-amino-acid polypeptide reads, in one-letter code: NADH-quinone oxidoreductase subunit B (185 aa).

[4Fe-4S] cluster is bound by residues C37, C38, C103, and C132.

The protein belongs to the complex I 20 kDa subunit family. NDH-1 is composed of 14 different subunits. Subunits NuoB, C, D, E, F, and G constitute the peripheral sector of the complex. [4Fe-4S] cluster serves as cofactor.

It localises to the cell membrane. It carries out the reaction a quinone + NADH + 5 H(+)(in) = a quinol + NAD(+) + 4 H(+)(out). Functionally, NDH-1 shuttles electrons from NADH, via FMN and iron-sulfur (Fe-S) centers, to quinones in the respiratory chain. The immediate electron acceptor for the enzyme in this species is believed to be a menaquinone. Couples the redox reaction to proton translocation (for every two electrons transferred, four hydrogen ions are translocated across the cytoplasmic membrane), and thus conserves the redox energy in a proton gradient. The chain is NADH-quinone oxidoreductase subunit B from Thermobifida fusca (strain YX).